The primary structure comprises 263 residues: Ribosomal RNA small subunit methyltransferase A (263 aa).

S-adenosyl-L-methionine-binding residues include isoleucine 18, glycine 43, glutamate 65, aspartate 91, and asparagine 110.

The protein belongs to the class I-like SAM-binding methyltransferase superfamily. rRNA adenine N(6)-methyltransferase family. RsmA subfamily.

The protein resides in the cytoplasm. The catalysed reaction is adenosine(1518)/adenosine(1519) in 16S rRNA + 4 S-adenosyl-L-methionine = N(6)-dimethyladenosine(1518)/N(6)-dimethyladenosine(1519) in 16S rRNA + 4 S-adenosyl-L-homocysteine + 4 H(+). Functionally, specifically dimethylates two adjacent adenosines (A1518 and A1519) in the loop of a conserved hairpin near the 3'-end of 16S rRNA in the 30S particle. May play a critical role in biogenesis of 30S subunits. This chain is Ribosomal RNA small subunit methyltransferase A, found in Ehrlichia chaffeensis (strain ATCC CRL-10679 / Arkansas).